Reading from the N-terminus, the 352-residue chain is Probable RNA methyltransferase CV_2253 (352 aa).

E91 serves as the catalytic Proton acceptor. Positions L94–D320 constitute a Radical SAM core domain. C101 and C325 are joined by a disulfide. The [4Fe-4S] cluster site is built by C108, C112, and C115. S-adenosyl-L-methionine is bound by residues G153 to E154, S183, S206 to H208, and N282. The active-site S-methylcysteine intermediate is the C325.

The protein belongs to the radical SAM superfamily. RlmN family. [4Fe-4S] cluster serves as cofactor.

It localises to the cytoplasm. The protein is Probable RNA methyltransferase CV_2253 of Chromobacterium violaceum (strain ATCC 12472 / DSM 30191 / JCM 1249 / CCUG 213 / NBRC 12614 / NCIMB 9131 / NCTC 9757 / MK).